The sequence spans 453 residues: 13-hydroxylupanine O-tigloyltransferase (453 aa).

Catalysis depends on proton acceptor residues H166 and D385.

This sequence belongs to the plant acyltransferase family. As to quaternary structure, monomer. Expressed in roots and hypocotyls. Detected in seeds, leaves and cotyledons, but not in young developing leaves.

The catalysed reaction is 13-hydroxylupanine + (2E)-2-methylbut-2-enoyl-CoA = 13-(2-methylcrotonoyloxy)lupanine + CoA. With respect to regulation, inhibited by N-ethylmaleimide, p-chloromercuribenzoic acid and diethylpyrocarbonate (DEPC). In terms of biological role, acyl-CoA-dependent acyltransferase involved in the synthesis of lupanine alkaloids. Can use both (-)-13alpha-hydroxymultiflorine and (+)-13alpha-hydroxylupanine as substrates. Lower activity with (-)-3beta, 13alpha-dihydroxylupanine, but no activity with (+)-epilupinine and (-)-lupinine as substrates. Tigloyl-CoA, benzoyl-CoA and, more slowly, acetyl-CoA, propionyl-CoA and 2-butenoyl-CoA can act as acyl donors. In Lupinus albus (White lupine), this protein is 13-hydroxylupanine O-tigloyltransferase (HMT/HLT).